Reading from the N-terminus, the 221-residue chain is Endo-1,4-beta-xylanase 11A (221 aa).

The signal sequence occupies residues 1-17; sequence MVSFTTLLTAVATAVSA. The GH11 domain maps to 28–218; it reads RGIQPGTGVH…SSGSAEIEVR (191 aa). N-linked (GlcNAc...) asparagine glycosylation is present at asparagine 89. Glutamate 113 functions as the Nucleophile in the catalytic mechanism. The active-site Proton donor is the glutamate 205.

It belongs to the glycosyl hydrolase 11 (cellulase G) family.

It is found in the secreted. The enzyme catalyses Endohydrolysis of (1-&gt;4)-beta-D-xylosidic linkages in xylans.. It participates in glycan degradation; xylan degradation. Its activity is regulated as follows. Retains an activity of 52.5% in the presence of 5 mM SDS. Endo-1,4-beta-xylanase involved in the hydrolysis of xylan, a major structural heterogeneous polysaccharide found in plant biomass representing the second most abundant polysaccharide in the biosphere, after cellulose. Is an alkali-tolerant enzyme, exhibiting 50.6% of activity at pH 9.0, and 26.9% even at pH 10.0. The polypeptide is Endo-1,4-beta-xylanase 11A (Humicola insolens (Soft-rot fungus)).